Here is a 642-residue protein sequence, read N- to C-terminus: Sodium- and chloride-dependent neutral and basic amino acid transporter B(0+) (642 aa).

Residues 1 to 44 (MDKLKCPSFFKCREKEKVSASSENFHVGENDENQDRGNWSKKSD) lie on the Cytoplasmic side of the membrane. Transmembrane regions (helical) follow at residues 45–65 (YLLS…FPYL), 72–92 (GAFL…LFFL), and 110–130 (ILPL…FVTI). Residues 131-234 (YYNVIIAYSL…RSSGMNETGV (104 aa)) are Extracellular-facing. Asn155, Asn163, Asn174, Asn189, Asn197, Asn202, and Asn230 each carry an N-linked (GlcNAc...) asparagine glycan. The next 2 helical transmembrane spans lie at 235–255 (IVWY…AALF) and 261–281 (SGKV…ILLV). Asn302 carries N-linked (GlcNAc...) asparagine glycosylation. 7 helical membrane-spanning segments follow: residues 315-335 (AATQ…ALSS), 348-368 (IVVC…IFSI), 399-419 (LAQL…LLTL), 450-477 (ITLG…VHLI), 480-500 (FCAG…IIWI), 528-548 (CWFV…LVQF), and 563-583 (VALG…MAII). Residues 584 to 642 (KIIQAKGNIFQRLISCCRPASNWGPYLEQHRGERYKDMVDPKKEADHEIPTVSGSRKPE) lie on the Cytoplasmic side of the membrane. A compositionally biased stretch (basic and acidic residues) spans 622-632 (VDPKKEADHEI). The segment at 622 to 642 (VDPKKEADHEIPTVSGSRKPE) is disordered.

This sequence belongs to the sodium:neurotransmitter symporter (SNF) (TC 2.A.22) family. SLC6A14 subfamily. In terms of tissue distribution, levels are highest in adult and fetal lung, in trachea and salivary gland. Lower levels detected in mammary gland, stomach and pituitary gland, and very low levels in colon, uterus, prostate and testis.

The protein localises to the membrane. It is found in the apical cell membrane. The catalysed reaction is glycine(out) + chloride(out) + 2 Na(+)(out) = glycine(in) + chloride(in) + 2 Na(+)(in). It catalyses the reaction L-leucine(out) + chloride(out) + 2 Na(+)(out) = L-leucine(in) + chloride(in) + 2 Na(+)(in). The enzyme catalyses L-glutamine(out) + chloride(out) + 2 Na(+)(out) = L-glutamine(in) + chloride(in) + 2 Na(+)(in). It carries out the reaction L-arginine(out) + chloride(out) + 2 Na(+)(out) = L-arginine(in) + chloride(in) + 2 Na(+)(in). The catalysed reaction is (R)-carnitine(out) + chloride(out) + 2 Na(+)(out) = (R)-carnitine(in) + chloride(in) + 2 Na(+)(in). It catalyses the reaction O-butanoyl-(R)-carnitine(out) + chloride(out) + 2 Na(+)(out) = O-butanoyl-(R)-carnitine(in) + chloride(in) + 2 Na(+)(in). The enzyme catalyses O-propanoyl-(R)-carnitine(out) + chloride(out) + 2 Na(+)(out) = O-propanoyl-(R)-carnitine(in) + chloride(in) + 2 Na(+)(in). It carries out the reaction L-isoleucine(out) + chloride(out) + 2 Na(+)(out) = L-isoleucine(in) + chloride(in) + 2 Na(+)(in). The catalysed reaction is L-methionine(out) + chloride(out) + 2 Na(+)(out) = L-methionine(in) + chloride(in) + 2 Na(+)(in). It catalyses the reaction L-valine(out) + chloride(out) + 2 Na(+)(out) = L-valine(in) + chloride(in) + 2 Na(+)(in). The enzyme catalyses L-alanine(out) + chloride(out) + 2 Na(+)(out) = L-alanine(in) + chloride(in) + 2 Na(+)(in). It carries out the reaction L-serine(out) + chloride(out) + 2 Na(+)(out) = L-serine(in) + chloride(in) + 2 Na(+)(in). The catalysed reaction is L-cysteine(out) + chloride(out) + 2 Na(+)(out) = L-cysteine(in) + chloride(in) + 2 Na(+)(in). It catalyses the reaction L-asparagine(out) + chloride(out) + 2 Na(+)(out) = L-asparagine(in) + chloride(in) + 2 Na(+)(in). The enzyme catalyses L-threonine(out) + chloride(out) + 2 Na(+)(out) = L-threonine(in) + chloride(in) + 2 Na(+)(in). It carries out the reaction L-phenylalanine(out) + chloride(out) + 2 Na(+)(out) = L-phenylalanine(in) + chloride(in) + 2 Na(+)(in). The catalysed reaction is L-tryptophan(out) + chloride(out) + 2 Na(+)(out) = L-tryptophan(in) + chloride(in) + 2 Na(+)(in). It catalyses the reaction L-tyrosine(out) + chloride(out) + 2 Na(+)(out) = L-tyrosine(in) + chloride(in) + 2 Na(+)(in). The enzyme catalyses L-histidine(out) + chloride(out) + 2 Na(+)(out) = L-histidine(in) + chloride(in) + 2 Na(+)(in). It carries out the reaction L-lysine(out) + chloride(out) + 2 Na(+)(out) = L-lysine(in) + chloride(in) + 2 Na(+)(in). The catalysed reaction is beta-alanine(out) + chloride(out) + 2 Na(+)(out) = beta-alanine(in) + chloride(in) + 2 Na(+)(in). In terms of biological role, amino acid transporter that plays an important role in the absorption of amino acids in the intestinal tract. Mediates the uptake of a broad range of neutral and cationic amino acids (with the exception of proline) in a Na(+)/Cl(-)-dependent manner. Transports non-alpha-amino acids such as beta-alanine with low affinity, and has a higher affinity for dipolar and cationic amino acids such as leucine and lysine. Can also transport carnitine, butirylcarnitine and propionylcarnitine coupled to the transmembrane gradients of Na(+) and Cl(-). This is Sodium- and chloride-dependent neutral and basic amino acid transporter B(0+) from Homo sapiens (Human).